The chain runs to 592 residues: Imidazole glycerol phosphate synthase hisHF, chloroplastic (592 aa).

The transit peptide at 1–55 directs the protein to the chloroplast; that stretch reads MEATAAPFSSIVSSRQNFSSSSSIRASSPASLFLSQKSIGNVNRKFKSPRSLSVR. Positions 63 to 271 constitute a Glutamine amidotransferase type-1 domain; it reads VVTLLDYGAG…LHPKLPATQK (209 aa). Residues C141, H246, and E248 each act as for GATase activity in the active site. Residues 280-592 form a cyclase region; sequence LAKRVIACLD…LQEERIEVRI (313 aa). Catalysis depends on residues D289 and D447.

In the C-terminal section; belongs to the HisA/HisF family.

It localises to the plastid. The protein resides in the chloroplast. It carries out the reaction 5-[(5-phospho-1-deoxy-D-ribulos-1-ylimino)methylamino]-1-(5-phospho-beta-D-ribosyl)imidazole-4-carboxamide + L-glutamine = D-erythro-1-(imidazol-4-yl)glycerol 3-phosphate + 5-amino-1-(5-phospho-beta-D-ribosyl)imidazole-4-carboxamide + L-glutamate + H(+). It catalyses the reaction L-glutamine + H2O = L-glutamate + NH4(+). It participates in amino-acid biosynthesis; L-histidine biosynthesis; L-histidine from 5-phospho-alpha-D-ribose 1-diphosphate: step 5/9. IGPS catalyzes the conversion of PRFAR and glutamine to IGP, AICAR and glutamate. The glutaminase domain produces the ammonia necessary for the cyclase domain to produce IGP and AICAR from PRFAR. The ammonia is channeled to the active site of the cyclase domain. This Arabidopsis thaliana (Mouse-ear cress) protein is Imidazole glycerol phosphate synthase hisHF, chloroplastic (HISN4).